The chain runs to 305 residues: UDP-3-O-acyl-N-acetylglucosamine deacetylase (305 aa).

Residues histidine 79, histidine 238, and aspartate 242 each coordinate Zn(2+). The active-site Proton donor is histidine 265.

The protein belongs to the LpxC family. Zn(2+) serves as cofactor.

The enzyme catalyses a UDP-3-O-[(3R)-3-hydroxyacyl]-N-acetyl-alpha-D-glucosamine + H2O = a UDP-3-O-[(3R)-3-hydroxyacyl]-alpha-D-glucosamine + acetate. It functions in the pathway glycolipid biosynthesis; lipid IV(A) biosynthesis; lipid IV(A) from (3R)-3-hydroxytetradecanoyl-[acyl-carrier-protein] and UDP-N-acetyl-alpha-D-glucosamine: step 2/6. Its function is as follows. Catalyzes the hydrolysis of UDP-3-O-myristoyl-N-acetylglucosamine to form UDP-3-O-myristoylglucosamine and acetate, the committed step in lipid A biosynthesis. In Vibrio vulnificus (strain CMCP6), this protein is UDP-3-O-acyl-N-acetylglucosamine deacetylase.